Consider the following 190-residue polypeptide: Probable DNA replication complex GINS protein PSF2 (190 aa).

Belongs to the GINS2/PSF2 family. Component of the GINS complex which is a heterotetramer of gins1, gins2, gins3 and gins4.

The protein localises to the nucleus. Its function is as follows. The GINS complex plays an essential role in the initiation of DNA replication. In Brugia malayi (Filarial nematode worm), this protein is Probable DNA replication complex GINS protein PSF2.